Consider the following 228-residue polypeptide: MTQDELKALVAQAAADYVLANVPEGAVLGVGTGSTANLFIDAMAPHKARFAGAVSSSEASTRRLQGHGFAVLDLNEVDTIPVYVDGADEIDDTGAMIKGGGGALTREKIVASVAGRFVCIADGSKLVDVLGAFPLPVEVVPMARAAVARQLAALGGQPRLRMTKEGQIYQTDNGNVILDVSGLRIGEPKTLEAQINDIPGVVTVGLFAKRGADVLLLGTEAGVQRRDF.

Substrate-binding positions include 32 to 35, 85 to 88, and 98 to 101; these read TGST, DGAD, and KGGG. Glutamate 107 functions as the Proton acceptor in the catalytic mechanism. Lysine 125 is a substrate binding site.

This sequence belongs to the ribose 5-phosphate isomerase family. In terms of assembly, homodimer.

The catalysed reaction is aldehydo-D-ribose 5-phosphate = D-ribulose 5-phosphate. It functions in the pathway carbohydrate degradation; pentose phosphate pathway; D-ribose 5-phosphate from D-ribulose 5-phosphate (non-oxidative stage): step 1/1. Its function is as follows. Catalyzes the reversible conversion of ribose-5-phosphate to ribulose 5-phosphate. This is Ribose-5-phosphate isomerase A from Ralstonia nicotianae (strain ATCC BAA-1114 / GMI1000) (Ralstonia solanacearum).